The following is a 1054-amino-acid chain: Acid trehalase (1054 aa).

Residues 1-21 (MRFKSVFTLLPLLAQLPSGGA) form the signal peptide. N-linked (GlcNAc...) asparagine glycans are attached at residues N47, N135, N176, N283, and N307. Residue 448-449 (WD) coordinates substrate. N-linked (GlcNAc...) asparagine glycans are attached at residues N493, N513, N570, and N578. The Proton donor role is filled by E584. N618 and N644 each carry an N-linked (GlcNAc...) asparagine glycan. 650 to 651 (KQ) lines the substrate pocket. N-linked (GlcNAc...) asparagine glycans are attached at residues N665, N734, N803, N826, N838, N903, N937, N966, and N992.

The protein belongs to the glycosyl hydrolase 65 family.

The catalysed reaction is alpha,alpha-trehalose + H2O = alpha-D-glucose + beta-D-glucose. The protein is Acid trehalase (treA) of Emericella nidulans (strain FGSC A4 / ATCC 38163 / CBS 112.46 / NRRL 194 / M139) (Aspergillus nidulans).